Here is a 391-residue protein sequence, read N- to C-terminus: Probable sugar efflux transporter (391 aa).

The next 12 membrane-spanning stretches (helical) occupy residues 16-36 (VFVF…PVAL), 51-71 (VGLM…PLML), 82-102 (LLFL…AWNF), 103-123 (WVLL…WSIT), 138-158 (QALG…LPLG), 171-191 (FGVI…LLPP), 210-230 (PLLM…FTTY), 247-267 (ITTL…FLFG), 277-297 (FIAF…VFKN), 300-320 (WVIF…TIAL), 338-358 (IFSG…SIVI), and 361-381 (LGLG…LFWL).

The protein belongs to the major facilitator superfamily. SotB (TC 2.A.1.2) family.

Its subcellular location is the cell inner membrane. Its function is as follows. Involved in the efflux of sugars. The physiological role may be the reduction of the intracellular concentration of toxic sugars or sugar metabolites. This chain is Probable sugar efflux transporter, found in Helicobacter pylori (strain G27).